The sequence spans 628 residues: Somatic embryogenesis receptor kinase 2 (628 aa).

The signal sequence occupies residues 1–29 (MGRKKFEAFGFVCLISLLLLFNSLWLASS). At 30-241 (NMEGDALHSL…PTPGGYSATG (212 aa)) the chain is on the extracellular side. Residues 45 to 85 (DPNNVLQSWDPTLVNPCTWFHVTCNNENSVIRVDLGNADLS) form a PSKR1 binding region. Residues 56 to 58 (TLV) form a CLE44 binding region. Cys-61 and Cys-68 are disulfide-bonded. Leucine-rich repeat receptor-like protein kinase binding stretches follow at residues 62 to 81 (TWFH…DLGN) and 100 to 105 (YLELYS). Residue 64–65 (FH) participates in brassinolide binding. 4 LRR repeats span residues 95–119 (LKNL…LGNL), 121–143 (NLVS…LGKL), 144–167 (FKLR…LTNI), and 168–192 (MTLQ…SFSL). 2 N-linked (GlcNAc...) asparagine glycosylation sites follow: Asn-107 and Asn-118. 2 leucine-rich repeat receptor-like protein kinase binding regions span residues 126-129 (DLYL) and 148-150 (FLR). Residues Asn-153 and Asn-187 are each glycosylated (N-linked (GlcNAc...) asparagine). The segment at 174-197 (DLSNNRLSGSVPDNGSFSLFTPIS) is leucine-rich repeat receptor-like protein kinase binding. The cysteines at positions 205 and 213 are disulfide-linked. Residues 242–262 (AIAGGVAAGAALLFAAPALAF) traverse the membrane as a helical segment. Residues 263 to 628 (AWWRRRKPQE…LHAMELSGPR (366 aa)) are Cytoplasmic-facing. A Phosphothreonine modification is found at Thr-302. A Protein kinase domain is found at 305-592 (FSNKNILGRG…GLAEKWDEWQ (288 aa)). Position 311-319 (311-319 (LGRGGFGKV)) interacts with ATP. Residue Thr-328 is modified to Phosphothreonine. Residue Lys-333 coordinates ATP. Ser-386 and Ser-389 each carry phosphoserine. Catalysis depends on Asp-432, which acts as the Proton acceptor. 4 positions are modified to phosphothreonine: Thr-462, Thr-465, Thr-466, and Thr-471. Tyr-479 is modified (phosphotyrosine). The residue at position 481 (Ser-481) is a Phosphoserine. Thr-482 is modified (phosphothreonine). Ser-486 is subject to Phosphoserine. Phosphothreonine is present on Thr-562. Position 604 is a phosphoserine (Ser-604). At Thr-616 the chain carries Phosphothreonine. At Ser-625 the chain carries Phosphoserine.

The protein belongs to the protein kinase superfamily. Ser/Thr protein kinase family. Homo- and heterodimer. Component of the SERK1 signaling complex, composed of KAPP, CDC48A, GRF6 or GRF7, SERK1, SERK2, SERK3/BAK1 and BRI1. Bind to BRI1 in a brassinolide-dependent manner. Heterodimer with PSKR1. Interacts with the EF-Tu receptor EFR and FLS2 in a specific ligand-induced manner. Interacts with ERECTA in a EPF2-induced manner. Interacts with ERL1 in a EPF1-induced manner. Interacts with TMM. In the presence of the signal peptide RGF1, interacts with RGI3/RGFR1 and RGI4/RGFR2/SKM2. Binds to the peptide CLE44 in the presence of TDR. In terms of processing, autophosphorylated. In terms of tissue distribution, expressed in flowers, tapetum, developing microspores, all cells of the embryo sac, provascular strands and developing vascular bundles. Low expression in adult vascular tissue.

It is found in the cell membrane. It catalyses the reaction L-seryl-[protein] + ATP = O-phospho-L-seryl-[protein] + ADP + H(+). The enzyme catalyses L-threonyl-[protein] + ATP = O-phospho-L-threonyl-[protein] + ADP + H(+). Its function is as follows. Serine/threonine-kinase involved in brassinosteroid-dependent and -independent signaling pathways. Acts redundantly with SERK1 as a control point for sporophytic development controlling male gametophyte production. Serves as coreceptor to small peptide (e.g. RGF1 and CLE44) signaling. Involved in the perception of phytosulfokine and subsequent signal transduction. This Arabidopsis thaliana (Mouse-ear cress) protein is Somatic embryogenesis receptor kinase 2.